Consider the following 728-residue polypeptide: Leucine-rich repeat and calponin homology domain-containing protein 1 (728 aa).

The segment covering 24-36 has biased composition (basic residues); sequence HHPHHHHHHHQHH. The segment at 24–57 is disordered; sequence HHPHHHHHHHQHHGGTGAPGGAGGGGGGSGGFNL. The span at 37-54 shows a compositional bias: gly residues; that stretch reads GGTGAPGGAGGGGGGSGG. 9 LRR repeats span residues 98–119, 121–143, 144–166, 167–187, 189–210, 212–234, 235–255, 257–278, and 283–304; these read DTVQADLSKNRLVEVPMELCHF, SLEILNLYHNCIRVIPEAIVNLQ, MLTYLNLSRNQLSALPACLCGLP, LKVLIASNNKLGSLPEEIGQL, QLMELDVSCNEITALPQQIGQL, SLRELNVRRNYLKVLPQELVDLS, LVKFDFSCNKVLVIPICFREM, QLQVLLLENNPLQSPPAQICTK, and IFKYLSIQACQIKTADSLYLHT. The segment covering 311-322 has biased composition (basic and acidic residues); that stretch reads HQHVEDGKKDSD. The tract at residues 311 to 348 is disordered; the sequence is HQHVEDGKKDSDSGVGSDNGDKRLSATEPSDEDTVSLN. S370 carries the phosphoserine modification. The segment at 377–398 is disordered; that stretch reads HQEFQPEPSLLGDSTNSGEERD. Position 409 is a phosphoserine (S409). Polar residues predominate over residues 516–525; that stretch reads LQSNGSQYSP. Positions 516–547 are disordered; the sequence is LQSNGSQYSPNEIRENSPAVSPTTNSTAPFGL. Phosphoserine occurs at positions 532 and 536. Over residues 533-543 the composition is skewed to polar residues; that stretch reads PAVSPTTNSTA. Phosphothreonine is present on T568. The region spanning 576 to 692 is the Calponin-homology (CH) domain; it reads MREEKELVEQ…TLLALGEKAP (117 aa).

Interacts (via LRR repeats) with unphosphorylated DOCK8 (via DHR-2 domain); the interaction prevents the interaction between DOCK8 and CDC42.

It is found in the cytoplasm. Functionally, acts as a negative regulator of GTPase CDC42 by sequestering CDC42-guanine exchange factor DOCK8. Probably by preventing CDC42 activation, negatively regulates CD4(+) T-cell migration. The chain is Leucine-rich repeat and calponin homology domain-containing protein 1 (LRCH1) from Homo sapiens (Human).